Reading from the N-terminus, the 293-residue chain is ATP synthase gamma chain (293 aa).

Belongs to the ATPase gamma chain family. In terms of assembly, F-type ATPases have 2 components, CF(1) - the catalytic core - and CF(0) - the membrane proton channel. CF(1) has five subunits: alpha(3), beta(3), gamma(1), delta(1), epsilon(1). CF(0) has three main subunits: a, b and c.

It localises to the cell inner membrane. Its function is as follows. Produces ATP from ADP in the presence of a proton gradient across the membrane. The gamma chain is believed to be important in regulating ATPase activity and the flow of protons through the CF(0) complex. In Nitrosospira multiformis (strain ATCC 25196 / NCIMB 11849 / C 71), this protein is ATP synthase gamma chain.